A 901-amino-acid chain; its full sequence is Protein translocase subunit SecA (901 aa).

Residues Q87, G105 to T109, and D512 each bind ATP. Zn(2+)-binding residues include C885, C887, C896, and H897.

It belongs to the SecA family. In terms of assembly, monomer and homodimer. Part of the essential Sec protein translocation apparatus which comprises SecA, SecYEG and auxiliary proteins SecDF-YajC and YidC. The cofactor is Zn(2+).

The protein resides in the cell inner membrane. The protein localises to the cytoplasm. It carries out the reaction ATP + H2O + cellular proteinSide 1 = ADP + phosphate + cellular proteinSide 2.. In terms of biological role, part of the Sec protein translocase complex. Interacts with the SecYEG preprotein conducting channel. Has a central role in coupling the hydrolysis of ATP to the transfer of proteins into and across the cell membrane, serving both as a receptor for the preprotein-SecB complex and as an ATP-driven molecular motor driving the stepwise translocation of polypeptide chains across the membrane. This chain is Protein translocase subunit SecA, found in Salmonella agona (strain SL483).